Consider the following 428-residue polypeptide: Cysteine--tRNA ligase (428 aa).

C23 contacts Zn(2+). A 'HIGH' region motif is present at residues 25-35; sequence PTVYNDLHLGN. Zn(2+)-binding residues include C196, H221, and E225. A 'KMSKS' region motif is present at residues 253-257; sequence KMSKS. Residue K256 coordinates ATP.

It belongs to the class-I aminoacyl-tRNA synthetase family. Monomer. It depends on Zn(2+) as a cofactor.

The protein localises to the cytoplasm. It catalyses the reaction tRNA(Cys) + L-cysteine + ATP = L-cysteinyl-tRNA(Cys) + AMP + diphosphate. This Mycoplasma genitalium (strain ATCC 33530 / DSM 19775 / NCTC 10195 / G37) (Mycoplasmoides genitalium) protein is Cysteine--tRNA ligase (cysS).